The sequence spans 572 residues: Probable pyruvate decarboxylase C186.09 (572 aa).

The substrate site is built by aspartate 38 and histidine 125. Residues 400–482 (DSWFGGMRIT…FLINNRGYTI (83 aa)) are thiamine pyrophosphate binding. 3 residues coordinate Mg(2+): aspartate 450, asparagine 477, and glycine 479. Residue glutamate 483 coordinates substrate.

It belongs to the TPP enzyme family. Homotetramer. It depends on a metal cation as a cofactor. Requires thiamine diphosphate as cofactor.

The catalysed reaction is a 2-oxocarboxylate + H(+) = an aldehyde + CO2. This Schizosaccharomyces pombe (strain 972 / ATCC 24843) (Fission yeast) protein is Probable pyruvate decarboxylase C186.09.